Here is a 60-residue protein sequence, read N- to C-terminus: Toxin C10S2C2 (60 aa).

4 disulfides stabilise this stretch: C3/C22, C17/C39, C41/C52, and C53/C58. An important for binding to L-type calcium channels region spans residues 41–48; that stretch reads CPTAMWPY.

Belongs to the three-finger toxin family. Short-chain subfamily. L-type calcium blocker sub-subfamily. As to expression, expressed by the venom gland.

Its subcellular location is the secreted. Its function is as follows. This specific blocker of the L-type calcium channel (Cav1/CACNA1) is a smooth muscle relaxant and an inhibitor of cardiac contractions. This chain is Toxin C10S2C2, found in Dendroaspis angusticeps (Eastern green mamba).